Reading from the N-terminus, the 831-residue chain is DNA ligase (831 aa).

Residues 34–38 (DADYD), 83–84 (SL), and glutamate 114 contribute to the NAD(+) site. The N6-AMP-lysine intermediate role is filled by lysine 116. NAD(+) contacts are provided by arginine 137, glutamate 174, lysine 291, and lysine 315. Cysteine 409, cysteine 412, cysteine 427, and cysteine 433 together coordinate Zn(2+). The 83-residue stretch at 749-831 (AHTAPLNGQS…LAFLEQYSAQ (83 aa)) folds into the BRCT domain.

The protein belongs to the NAD-dependent DNA ligase family. LigA subfamily. Mg(2+) serves as cofactor. Requires Mn(2+) as cofactor.

The enzyme catalyses NAD(+) + (deoxyribonucleotide)n-3'-hydroxyl + 5'-phospho-(deoxyribonucleotide)m = (deoxyribonucleotide)n+m + AMP + beta-nicotinamide D-nucleotide.. In terms of biological role, DNA ligase that catalyzes the formation of phosphodiester linkages between 5'-phosphoryl and 3'-hydroxyl groups in double-stranded DNA using NAD as a coenzyme and as the energy source for the reaction. It is essential for DNA replication and repair of damaged DNA. The polypeptide is DNA ligase (Xylella fastidiosa (strain M23)).